The following is a 424-amino-acid chain: Serine hydroxymethyltransferase (424 aa).

Residues leucine 118 and 122–124 (GHL) each bind (6S)-5,6,7,8-tetrahydrofolate. Position 227 is an N6-(pyridoxal phosphate)lysine (lysine 227). Position 351-353 (351-353 (SPF)) interacts with (6S)-5,6,7,8-tetrahydrofolate.

This sequence belongs to the SHMT family. As to quaternary structure, homodimer. Requires pyridoxal 5'-phosphate as cofactor.

Its subcellular location is the cytoplasm. It carries out the reaction (6R)-5,10-methylene-5,6,7,8-tetrahydrofolate + glycine + H2O = (6S)-5,6,7,8-tetrahydrofolate + L-serine. The protein operates within one-carbon metabolism; tetrahydrofolate interconversion. It participates in amino-acid biosynthesis; glycine biosynthesis; glycine from L-serine: step 1/1. Catalyzes the reversible interconversion of serine and glycine with tetrahydrofolate (THF) serving as the one-carbon carrier. This reaction serves as the major source of one-carbon groups required for the biosynthesis of purines, thymidylate, methionine, and other important biomolecules. Also exhibits THF-independent aldolase activity toward beta-hydroxyamino acids, producing glycine and aldehydes, via a retro-aldol mechanism. This is Serine hydroxymethyltransferase from Pseudothermotoga lettingae (strain ATCC BAA-301 / DSM 14385 / NBRC 107922 / TMO) (Thermotoga lettingae).